We begin with the raw amino-acid sequence, 154 residues long: Interleukin-2 (154 aa).

The first 20 residues, 1–20, serve as a signal peptide directing secretion; it reads MYKMQLLCCIALTLALMANG. O-linked (GalNAc...) threonine glycosylation occurs at Thr23. A disulfide bridge connects residues Cys78 and Cys126.

It belongs to the IL-2 family.

It localises to the secreted. Its function is as follows. Cytokine produced by activated CD4-positive helper T-cells and to a lesser extend activated CD8-positive T-cells and natural killer (NK) cells that plays pivotal roles in the immune response and tolerance. Binds to a receptor complex composed of either the high-affinity trimeric IL-2R (IL2RA/CD25, IL2RB/CD122 and IL2RG/CD132) or the low-affinity dimeric IL-2R (IL2RB and IL2RG). Interaction with the receptor leads to oligomerization and conformation changes in the IL-2R subunits resulting in downstream signaling starting with phosphorylation of JAK1 and JAK3. In turn, JAK1 and JAK3 phosphorylate the receptor to form a docking site leading to the phosphorylation of several substrates including STAT5. This process leads to activation of several pathways including STAT, phosphoinositide-3-kinase/PI3K and mitogen-activated protein kinase/MAPK pathways. Functions as a T-cell growth factor and can increase NK-cell cytolytic activity as well. Promotes strong proliferation of activated B-cells and subsequently immunoglobulin production. Plays a pivotal role in regulating the adaptive immune system by controlling the survival and proliferation of regulatory T-cells, which are required for the maintenance of immune tolerance. Moreover, participates in the differentiation and homeostasis of effector T-cell subsets, including Th1, Th2, Th17 as well as memory CD8-positive T-cells. The sequence is that of Interleukin-2 (IL2) from Sus scrofa (Pig).